Here is a 107-residue protein sequence, read N- to C-terminus: MAELAKYERVVIDQDICISCGACVAACPYQALELDENGKSRLIWEKCKDDFSCVAVCPVKAISKASEATPEAKAKKGWYRFGKSLTPEEQKAFEEWKTKYGITAPPV.

2 consecutive 4Fe-4S ferredoxin-type domains span residues 8–37 (ERVV…LDEN) and 38–67 (GKSR…KASE). [4Fe-4S] cluster is bound by residues Cys17, Cys20, and Cys23. Cys27, Cys47, and Cys53 together coordinate [3Fe-4S] cluster. Cys57 is a [4Fe-4S] cluster binding site.

In terms of assembly, monomer. [4Fe-4S] cluster serves as cofactor. Requires [3Fe-4S] cluster as cofactor. Post-translationally, the N-terminus is blocked.

In terms of biological role, ferredoxins are iron-sulfur proteins that transfer electrons in a wide variety of metabolic reactions. This is Ferredoxin from Pyrobaculum islandicum (strain DSM 4184 / JCM 9189 / GEO3).